The following is a 428-amino-acid chain: Ribulose bisphosphate carboxylase (428 aa).

Lys-151 serves as the catalytic Proton acceptor. A substrate-binding site is contributed by Lys-153. 3 residues coordinate Mg(2+): Lys-177, Asp-179, and Glu-180. An N6-carboxylysine modification is found at Lys-177. His-270 serves as the catalytic Proton acceptor. Substrate contacts are provided by residues Arg-271, His-303, 354–356 (SGG), and 376–379 (QFGG).

It belongs to the RuBisCO large chain family. Type III subfamily. In terms of assembly, homodimer or homodecamer. In contrast to form I RuBisCO, the form III RuBisCO is composed solely of large subunits. It depends on Mg(2+) as a cofactor.

The catalysed reaction is 2 (2R)-3-phosphoglycerate + 2 H(+) = D-ribulose 1,5-bisphosphate + CO2 + H2O. The enzyme catalyses D-ribulose 1,5-bisphosphate + O2 = 2-phosphoglycolate + (2R)-3-phosphoglycerate + 2 H(+). Its function is as follows. Catalyzes the addition of molecular CO(2) and H(2)O to ribulose 1,5-bisphosphate (RuBP), generating two molecules of 3-phosphoglycerate (3-PGA). Functions in an archaeal AMP degradation pathway, together with AMP phosphorylase and R15P isomerase. This Methanosarcina barkeri (strain Fusaro / DSM 804) protein is Ribulose bisphosphate carboxylase.